We begin with the raw amino-acid sequence, 330 residues long: Solute-binding protein NAS141_03721 (330 aa).

Positions 1-27 are cleaved as a signal peptide; that stretch reads MSFFTKTAQLVSGAAVAATLFTATAQA. Alpha-D-mannuronate-binding positions include E75, N97, R153, R173, Y196, 213–214, and R240; that span reads NE. Alpha-D-taluronate contacts are provided by residues E75, N97, R153, R173, Y196, 213–214, and R240; that span reads NE.

The protein belongs to the bacterial solute-binding protein 7 family. In terms of assembly, the complex is comprised of an extracytoplasmic solute-binding protein and a heteromeric permease formed by two transmembrane proteins.

It localises to the periplasm. Its function is as follows. Solute-binding protein that binds D-mannuronate and D-taluronate (in vitro). Probably part of a tripartite ATP-independent periplasmic (TRAP) transport system that mediates solute transport into the cytoplasm. This is Solute-binding protein NAS141_03721 from Sulfitobacter sp. (strain NAS-14.1).